The following is a 198-amino-acid chain: NAD(P)H dehydrogenase (quinone) (198 aa).

Positions 4-189 (ILVLYYSMYG…SIARYQGEYV (186 aa)) constitute a Flavodoxin-like domain. FMN is bound by residues 10-15 (SMYGHI) and 78-80 (TRF). Tyr-12 contacts NAD(+). Residue Trp-98 participates in substrate binding. Residues 113–118 (STGTGG) and His-133 contribute to the FMN site.

Belongs to the WrbA family. It depends on FMN as a cofactor.

It carries out the reaction a quinone + NADH + H(+) = a quinol + NAD(+). The enzyme catalyses a quinone + NADPH + H(+) = a quinol + NADP(+). The polypeptide is NAD(P)H dehydrogenase (quinone) (Citrobacter koseri (strain ATCC BAA-895 / CDC 4225-83 / SGSC4696)).